We begin with the raw amino-acid sequence, 329 residues long: BTB/POZ domain-containing adapter for CUL3-mediated RhoA degradation protein 1 (329 aa).

Residues methionine 1–serine 22 are compositionally biased toward low complexity. The segment at methionine 1–tyrosine 31 is disordered. A BTB domain is found at lysine 41–glutamate 109. Residues alanine 282 to histidine 303 are disordered.

It belongs to the BACURD family. Homotetramer; forms a two-fold symmetric tetramer in solution. Interacts with CUL3; interaction is direct and forms a 5:5 heterodecamer. Component of the BCR(KCTD13) E3 ubiquitin ligase complex, at least composed of CUL3, KCTD13/BACURD1 and RBX1. Interacts with RHOA; with a preference for RhoA-GDP. Interacts with POLD2 and PCNA. Interacts with SPRTN. In terms of tissue distribution, expressed in a wide variety of tissues.

Its subcellular location is the nucleus. The protein operates within protein modification; protein ubiquitination. In terms of biological role, substrate-specific adapter of a BCR (BTB-CUL3-RBX1) E3 ubiquitin-protein ligase complex required for synaptic transmission. The BCR(KCTD13) E3 ubiquitin ligase complex mediates the ubiquitination of RHOA, leading to its degradation by the proteasome Degradation of RHOA regulates the actin cytoskeleton and promotes synaptic transmission. The chain is BTB/POZ domain-containing adapter for CUL3-mediated RhoA degradation protein 1 (KCTD13) from Homo sapiens (Human).